A 391-amino-acid chain; its full sequence is MSRFLICSFALVLLYPAGIDMYLVGLPRIAADLNASEAQLHIAFSVYLAGMAAAMLFAGKVADRSGRKPVAIPGAALFIIASVFCSLAETSALFLAGRFLQGLGAGCCYVVAFAILRDTLDDRRRAKVLSLLNGITCIIPVLAPVLGHLIMLKFPWQSLFWTMATMGIAVLMLSLFILKETRPAAPAASDKPRENSESLLNRFFLSRVVITTLSVSVILTFVNTSPVLLMEIMGFERGEYATIMALTAGVSMTVSFSTPFALGIFKPRTLMITSQVLFLAAGITLAVSPSHAVSLFGITLICAGFSVGFGVAMSQALGPFSLRAGVASSTLGIAQVCGSSLWIWLAAVVGIGAWNMLIGILIACSIVSLLLIMFVAPGRPVAAHEEIHHHA.

Residues 1 to 3 (MSR) are Cytoplasmic-facing. A helical transmembrane segment spans residues 4 to 24 (FLICSFALVLLYPAGIDMYLV). Over 25–41 (GLPRIAADLNASEAQLH) the chain is Periplasmic. Residues 42–62 (IAFSVYLAGMAAAMLFAGKVA) traverse the membrane as a helical segment. Over 63–68 (DRSGRK) the chain is Cytoplasmic. The chain crosses the membrane as a helical span at residues 69–89 (PVAIPGAALFIIASVFCSLAE). The Periplasmic portion of the chain corresponds to 90–92 (TSA). Residues 93–113 (LFLAGRFLQGLGAGCCYVVAF) traverse the membrane as a helical segment. Residues 114–130 (AILRDTLDDRRRAKVLS) are Cytoplasmic-facing. The chain crosses the membrane as a helical span at residues 131 to 151 (LLNGITCIIPVLAPVLGHLIM). At 152–157 (LKFPWQ) the chain is on the periplasmic side. The chain crosses the membrane as a helical span at residues 158–178 (SLFWTMATMGIAVLMLSLFIL). Over 179–202 (KETRPAAPAASDKPRENSESLLNR) the chain is Cytoplasmic. A helical membrane pass occupies residues 203–222 (FFLSRVVITTLSVSVILTFV). The Periplasmic segment spans residues 223–244 (NTSPVLLMEIMGFERGEYATIM). A helical membrane pass occupies residues 245–265 (ALTAGVSMTVSFSTPFALGIF). The Cytoplasmic portion of the chain corresponds to 266 to 268 (KPR). A helical transmembrane segment spans residues 269-289 (TLMITSQVLFLAAGITLAVSP). Residues 290-292 (SHA) lie on the Periplasmic side of the membrane. The helical transmembrane segment at 293–313 (VSLFGITLICAGFSVGFGVAM) threads the bilayer. At 314–330 (SQALGPFSLRAGVASST) the chain is on the cytoplasmic side. Residues 331–351 (LGIAQVCGSSLWIWLAAVVGI) traverse the membrane as a helical segment. The Periplasmic segment spans residues 352–355 (GAWN). A helical membrane pass occupies residues 356 to 376 (MLIGILIACSIVSLLLIMFVA). At 377–391 (PGRPVAAHEEIHHHA) the chain is on the cytoplasmic side.

It belongs to the major facilitator superfamily. DHA1 family. MdtL (TC 2.A.1.2.22) subfamily.

It is found in the cell inner membrane. Confers resistance to chloramphenicol. This Escherichia coli O6:K15:H31 (strain 536 / UPEC) protein is Multidrug resistance protein MdtL.